A 393-amino-acid polypeptide reads, in one-letter code: MPMVIHSTSASWGTALKPITNSSSDTITPNPNLITTSRGSSTRPSYITTLTAKKMEQLLPMVINTWNMSEANEMAWRILQQSEGGVRQTRNAVVEGVTRCEELQCFHSVGYGGSPDERGETTLDAMVMDGGLMDVGAVGGLRNIKEAIRVARFVLEHTSHTLLVGQSATDFAVSMGFRTSSLVTPWSHDEWEKWKAKNCQPNCWLNVNPDPKLSCGPYVPKATPLTRWKEDRARNEYEIGENNHDTIGMIAIDVENQIHTGTSTNGMTHKIPGRVGDSPIVGAGSYADNEVGAAVATGDGDVMMRFLPSLLAVEAMRNGKSPQEAAELGIKRIAKYYKDFIGAVIAVNRLGQYAAACYGIPEFPYMISNPTHTVSVQTVKCLPYVHVEPLPKS.

The disordered stretch occupies residues 15–41 (ALKPITNSSSDTITPNPNLITTSRGSS). Over residues 19-41 (ITNSSSDTITPNPNLITTSRGSS) the composition is skewed to polar residues. 2 disulfides stabilise this stretch: C100-C105 and C199-C215. The active-site Nucleophile is the T246. Substrate contacts are provided by residues 274–277 (RVGD) and 297–300 (TGDG). Cysteines 357 and 381 form a disulfide.

Belongs to the Ntn-hydrolase family. As to quaternary structure, heterotetramer of two alpha and two beta chains arranged as a dimer of alpha/beta heterodimers. In terms of processing, cleaved into an alpha and beta chain by autocatalysis; this activates the enzyme. The N-terminal residue of the beta subunit is responsible for the nucleophile hydrolase activity.

It carries out the reaction N(4)-(beta-N-acetyl-D-glucosaminyl)-L-asparagine + H2O = N-acetyl-beta-D-glucosaminylamine + L-aspartate + H(+). In terms of biological role, cleaves the GlcNAc-Asn bond which joins oligosaccharides to the peptide of asparagine-linked glycoproteins. The sequence is that of Putative N(4)-(beta-N-acetylglucosaminyl)-L-asparaginase GH22932 from Drosophila grimshawi (Hawaiian fruit fly).